Here is a 35-residue protein sequence, read N- to C-terminus: uncharacterized protein (35 aa).

The chain crosses the membrane as a helical span at residues leucine 10–leucine 30.

It is found in the membrane. This is an uncharacterized protein from Salmonella typhimurium (strain LT2 / SGSC1412 / ATCC 700720).